We begin with the raw amino-acid sequence, 250 residues long: S-adenosyl-L-methionine-dependent 2-deoxy-scyllo-inosamine dehydrogenase (250 aa).

[4Fe-4S] cluster-binding residues include Cys-16, Cys-20, Cys-23, Cys-169, Cys-187, and Glu-223.

The protein belongs to the radical SAM superfamily. The cofactor is [4Fe-4S] cluster.

The catalysed reaction is 2-deoxy-scyllo-inosamine + S-adenosyl-L-methionine = 3-amino-2,3-dideoxy-scyllo-inosose + 5'-deoxyadenosine + L-methionine + H(+). It functions in the pathway antibiotic biosynthesis; butirosin biosynthesis. Its function is as follows. Catalyzes the radical S-adenosyl-L-methionine (SAM)-dependent two-electron oxidation of 2-deoxy-scyllo-inosamine (DOIA) to amino-dideoxy-scyllo-inosose (amino-DOI) in the biosynthetic pathway of butirosin. The chain is S-adenosyl-L-methionine-dependent 2-deoxy-scyllo-inosamine dehydrogenase (btrN) from Niallia circulans (Bacillus circulans).